A 303-amino-acid polypeptide reads, in one-letter code: Ribonuclease Z (303 aa).

Zn(2+) is bound by residues histidine 61, histidine 63, aspartate 65, histidine 66, histidine 139, aspartate 207, and histidine 266. The Proton acceptor role is filled by aspartate 65.

The protein belongs to the RNase Z family. As to quaternary structure, homodimer. Zn(2+) is required as a cofactor.

It carries out the reaction Endonucleolytic cleavage of RNA, removing extra 3' nucleotides from tRNA precursor, generating 3' termini of tRNAs. A 3'-hydroxy group is left at the tRNA terminus and a 5'-phosphoryl group is left at the trailer molecule.. Its function is as follows. Zinc phosphodiesterase, which displays some tRNA 3'-processing endonuclease activity. Probably involved in tRNA maturation, by removing a 3'-trailer from precursor tRNA. The polypeptide is Ribonuclease Z (Clostridium kluyveri (strain ATCC 8527 / DSM 555 / NBRC 12016 / NCIMB 10680 / K1)).